Here is a 757-residue protein sequence, read N- to C-terminus: 5-methyltetrahydropteroyltriglutamate--homocysteine methyltransferase (757 aa).

5-methyltetrahydropteroyltri-L-glutamate is bound by residues 17–20 (RELK) and Lys115. Residues 430 to 432 (IGS) and Glu483 contribute to the L-homocysteine site. Residues 430–432 (IGS) and Glu483 each bind L-methionine. Residues 514 to 515 (RC) and Trp560 contribute to the 5-methyltetrahydropteroyltri-L-glutamate site. Asp598 lines the L-homocysteine pocket. Position 598 (Asp598) interacts with L-methionine. Glu604 lines the 5-methyltetrahydropteroyltri-L-glutamate pocket. 3 residues coordinate Zn(2+): His640, Cys642, and Glu664. Catalysis depends on His693, which acts as the Proton donor. Residue Cys725 participates in Zn(2+) binding.

This sequence belongs to the vitamin-B12 independent methionine synthase family. Zn(2+) serves as cofactor.

It catalyses the reaction 5-methyltetrahydropteroyltri-L-glutamate + L-homocysteine = tetrahydropteroyltri-L-glutamate + L-methionine. It functions in the pathway amino-acid biosynthesis; L-methionine biosynthesis via de novo pathway; L-methionine from L-homocysteine (MetE route): step 1/1. Catalyzes the transfer of a methyl group from 5-methyltetrahydrofolate to homocysteine resulting in methionine formation. The polypeptide is 5-methyltetrahydropteroyltriglutamate--homocysteine methyltransferase (Buchnera aphidicola subsp. Schizaphis graminum (strain Sg)).